A 500-amino-acid chain; its full sequence is NADH-quinone oxidoreductase subunit N (500 aa).

A run of 14 helical transmembrane segments spans residues 13 to 33 (VMMP…IDLF), 42 to 62 (LLGL…LSLW), 79 to 99 (FAKS…LLSI), 111 to 131 (GEFY…ASSG), 133 to 153 (LITL…LVAI), 168 to 188 (VITG…IFGF), 211 to 231 (YVLS…LASA), 245 to 265 (TTPV…VIVL), 281 to 301 (ASML…TMII), 321 to 341 (VAHA…MFEA), 342 to 362 (IWFY…ILQV), 386 to 406 (AIAM…AGFI), 424 to 444 (VLAS…FGIF), and 461 to 481 (PPGV…LGVF).

This sequence belongs to the complex I subunit 2 family. As to quaternary structure, NDH-1 is composed of 14 different subunits. Subunits NuoA, H, J, K, L, M, N constitute the membrane sector of the complex.

It localises to the cell membrane. It carries out the reaction a quinone + NADH + 5 H(+)(in) = a quinol + NAD(+) + 4 H(+)(out). In terms of biological role, NDH-1 shuttles electrons from NADH, via FMN and iron-sulfur (Fe-S) centers, to quinones in the respiratory chain. The immediate electron acceptor for the enzyme in this species is believed to be a menaquinone. Couples the redox reaction to proton translocation (for every two electrons transferred, four hydrogen ions are translocated across the cytoplasmic membrane), and thus conserves the redox energy in a proton gradient. This chain is NADH-quinone oxidoreductase subunit N, found in Anoxybacillus flavithermus (strain DSM 21510 / WK1).